The chain runs to 261 residues: Tryptophan synthase alpha chain (261 aa).

Residues Glu47 and Asp58 each act as proton acceptor in the active site.

Belongs to the TrpA family. In terms of assembly, tetramer of two alpha and two beta chains.

The catalysed reaction is (1S,2R)-1-C-(indol-3-yl)glycerol 3-phosphate + L-serine = D-glyceraldehyde 3-phosphate + L-tryptophan + H2O. Its pathway is amino-acid biosynthesis; L-tryptophan biosynthesis; L-tryptophan from chorismate: step 5/5. In terms of biological role, the alpha subunit is responsible for the aldol cleavage of indoleglycerol phosphate to indole and glyceraldehyde 3-phosphate. The sequence is that of Tryptophan synthase alpha chain from Neisseria meningitidis serogroup B (strain ATCC BAA-335 / MC58).